The primary structure comprises 115 residues: Phosphoribosyl-ATP pyrophosphatase (115 aa).

The protein belongs to the PRA-PH family.

The protein localises to the cytoplasm. It catalyses the reaction 1-(5-phospho-beta-D-ribosyl)-ATP + H2O = 1-(5-phospho-beta-D-ribosyl)-5'-AMP + diphosphate + H(+). The protein operates within amino-acid biosynthesis; L-histidine biosynthesis; L-histidine from 5-phospho-alpha-D-ribose 1-diphosphate: step 2/9. In Bordetella parapertussis (strain 12822 / ATCC BAA-587 / NCTC 13253), this protein is Phosphoribosyl-ATP pyrophosphatase.